A 293-amino-acid polypeptide reads, in one-letter code: MTTQQDYTQDNDKLYRYLFQHRAVRGEWVRLNKTFTDTLNTHQYPKAVQDLLGEMMVATNLLTATLKFDGNITVQIQGDGPLRLALVNGNDQQQIRALARVDGNITENMSLHNMIGKGVLVITIAPKEGERYQGVISLDKPTITECLEDYFVRSEQLQTQLIIRTGEYEGKPVAAGMLLQIMPDGSGTPEDFEHLTTLAATVKDEELFGLPAEELLYRLYHEETVNLYPEQDVQFFCGCSAERSGSALLLISDEEIDEILAEHKGSIDMQCECCGTHYFFNKEAIEKLKSTRV.

2 cysteine pairs are disulfide-bonded: Cys237-Cys239 and Cys271-Cys274.

It belongs to the HSP33 family. Post-translationally, under oxidizing conditions two disulfide bonds are formed involving the reactive cysteines. Under reducing conditions zinc is bound to the reactive cysteines and the protein is inactive.

Its subcellular location is the cytoplasm. Redox regulated molecular chaperone. Protects both thermally unfolding and oxidatively damaged proteins from irreversible aggregation. Plays an important role in the bacterial defense system toward oxidative stress. The sequence is that of 33 kDa chaperonin from Haemophilus influenzae (strain PittEE).